Reading from the N-terminus, the 313-residue chain is Porphobilinogen deaminase (313 aa).

C242 carries the S-(dipyrrolylmethanemethyl)cysteine modification.

The protein belongs to the HMBS family. As to quaternary structure, monomer. Requires dipyrromethane as cofactor.

It catalyses the reaction 4 porphobilinogen + H2O = hydroxymethylbilane + 4 NH4(+). It participates in porphyrin-containing compound metabolism; protoporphyrin-IX biosynthesis; coproporphyrinogen-III from 5-aminolevulinate: step 2/4. Functionally, tetrapolymerization of the monopyrrole PBG into the hydroxymethylbilane pre-uroporphyrinogen in several discrete steps. The protein is Porphobilinogen deaminase of Escherichia coli O45:K1 (strain S88 / ExPEC).